A 213-amino-acid polypeptide reads, in one-letter code: Large ribosomal subunit protein uL1 (213 aa).

This sequence belongs to the universal ribosomal protein uL1 family. In terms of assembly, part of the 50S ribosomal subunit.

Its function is as follows. Binds directly to 23S rRNA. Probably involved in E site tRNA release. Protein L1 is also a translational repressor protein, it controls the translation of its operon by binding to its mRNA. This chain is Large ribosomal subunit protein uL1, found in Methanosarcina barkeri (strain Fusaro / DSM 804).